The primary structure comprises 366 residues: Agamous-like MADS-box protein AGL36 (366 aa).

The MADS-box domain occupies 1 to 59 (MKKVKLSLIANERSRKTSFIKRKDGIFKKLHELSTLCGVQACALIYSPFIPVPESWPSR). The stretch at 86–115 (TYLMERITKAKEQLKNLAAENRELQVRRFM) forms a coiled coil.

Interacts with AGL62.

The protein localises to the nucleus. Probable transcription factor. The polypeptide is Agamous-like MADS-box protein AGL36 (AGL36) (Arabidopsis thaliana (Mouse-ear cress)).